Consider the following 351-residue polypeptide: Photosystem II D2 protein (351 aa).

Residues 39-59 (CAYLALGGWLTGTTFVTSWYT) traverse the membrane as a helical segment. Position 116 (histidine 116) interacts with chlorophyll a. A helical transmembrane segment spans residues 123–139 (GFMLRQFEIARLVGIRP). Pheophytin a is bound by residues glutamine 128 and asparagine 141. Residues 151-164 (VFVSVFLMYPLGQS) form a helical membrane-spanning segment. Histidine 196 is a chlorophyll a binding site. The helical transmembrane segment at 206–226 (GALLCAIHGATVENTLFEDGE) threads the bilayer. Residues histidine 213 and phenylalanine 260 each contribute to the a plastoquinone site. Histidine 213 serves as a coordination point for Fe cation. Histidine 267 is a Fe cation binding site. A helical transmembrane segment spans residues 277–293 (GLWMSAIGIVGLALNLR).

Belongs to the reaction center PufL/M/PsbA/D family. As to quaternary structure, PSII is composed of 1 copy each of membrane proteins PsbA, PsbB, PsbC, PsbD, PsbE, PsbF, PsbH, PsbI, PsbJ, PsbK, PsbL, PsbM, PsbT, PsbX, PsbY, PsbZ, Psb30/Ycf12, peripheral proteins PsbO, CyanoQ (PsbQ), PsbU, PsbV and a large number of cofactors. It forms dimeric complexes. The D1/D2 heterodimer binds P680, chlorophylls that are the primary electron donor of PSII, and subsequent electron acceptors. It shares a non-heme iron and each subunit binds pheophytin, quinone, additional chlorophylls, carotenoids and lipids. There is also a Cl(-1) ion associated with D1 and D2, which is required for oxygen evolution. The PSII complex binds additional chlorophylls, carotenoids and specific lipids. is required as a cofactor.

The protein localises to the cellular thylakoid membrane. The enzyme catalyses 2 a plastoquinone + 4 hnu + 2 H2O = 2 a plastoquinol + O2. In terms of biological role, photosystem II (PSII) is a light-driven water:plastoquinone oxidoreductase that uses light energy to abstract electrons from H(2)O, generating O(2) and a proton gradient subsequently used for ATP formation. It consists of a core antenna complex that captures photons, and an electron transfer chain that converts photonic excitation into a charge separation. The D1/D2 (PsbA/PsbD) reaction center heterodimer binds P680, the primary electron donor of PSII as well as several subsequent electron acceptors. D2 is needed for assembly of a stable PSII complex. The polypeptide is Photosystem II D2 protein (Crocosphaera subtropica (strain ATCC 51142 / BH68) (Cyanothece sp. (strain ATCC 51142))).